The sequence spans 788 residues: Ribonucleoside-diphosphate reductase subunit alpha (788 aa).

The region spanning 2 to 92 is the ATP-cone domain; sequence ITVVKRNGRI…LYDLYHKVSG (91 aa). Residues Lys-6, 12 to 18, and Thr-52 contribute to the ATP site; that span reads EPLDITK. Thr-200 contributes to the GDP binding site. Cys-216 and Cys-497 are oxidised to a cystine. Residues 223–225 and Arg-253 each bind dTTP; that span reads DNI. Asn-424 contributes to the GDP binding site. Asn-424 acts as the Proton acceptor in catalysis. Cys-426 serves as the catalytic Cysteine radical intermediate. Residues Glu-428 and 661-663 contribute to the GDP site; that span reads SSI. Residue Glu-428 is the Proton acceptor of the active site.

Belongs to the ribonucleoside diphosphate reductase large chain family. In terms of assembly, tetramer of two alpha and two beta subunits.

It carries out the reaction a 2'-deoxyribonucleoside 5'-diphosphate + [thioredoxin]-disulfide + H2O = a ribonucleoside 5'-diphosphate + [thioredoxin]-dithiol. Under complex allosteric control mediated by deoxynucleoside triphosphates and ATP binding to separate specificity and activation sites on the alpha subunit. The type of nucleotide bound at the specificity site determines substrate preference. It seems probable that ATP makes the enzyme reduce CDP and UDP, dGTP favors ADP reduction and dTTP favors GDP reduction. Stimulated by ATP and inhibited by dATP binding to the activity site. In terms of biological role, provides the precursors necessary for DNA synthesis. Catalyzes the biosynthesis of deoxyribonucleotides from the corresponding ribonucleotides. This Helicobacter pylori (strain ATCC 700392 / 26695) (Campylobacter pylori) protein is Ribonucleoside-diphosphate reductase subunit alpha (nrdA).